Consider the following 78-residue polypeptide: MICOS complex subunit MIC10 (78 aa).

An N-acetylserine modification is found at Ser-2. Residues 17-36 (AVVKIGTGFGLGIVFSLTFF) form a helical membrane-spanning segment. Topologically, residues 37 to 78 (KRRMWPLAFGSGMGLGMAYSNCQHDFQAPYLLHGKYVKEQEQ) are mitochondrial intermembrane.

Belongs to the MICOS complex subunit Mic10 family. As to quaternary structure, component of the mitochondrial contact site and cristae organizing system (MICOS) complex, composed of at least MICOS10/MIC10, CHCHD3/MIC19, CHCHD6/MIC25, APOOL/MIC27, IMMT/MIC60, APOO/MIC23/MIC26 and MICOS13/MIC13. This complex was also known under the names MINOS or MitOS complex. The MICOS complex associates with mitochondrial outer membrane proteins SAMM50, MTX1 and MTX2 (together described as components of the mitochondrial outer membrane sorting assembly machinery (SAM) complex) and DNAJC11, mitochondrial inner membrane protein TMEM11 and with HSPA9. The MICOS and SAM complexes together with DNAJC11 are part of a large protein complex spanning both membranes termed the mitochondrial intermembrane space bridging (MIB) complex. Interacts with IMMT/MIC60 and MICOS13/MIC13. Interacts with APOO/MIC23/MIC26 and APOOL/MIC27. Interacts with ARMC1.

The protein localises to the mitochondrion inner membrane. Component of the MICOS complex, a large protein complex of the mitochondrial inner membrane that plays crucial roles in the maintenance of crista junctions, inner membrane architecture, and formation of contact sites to the outer membrane. This Homo sapiens (Human) protein is MICOS complex subunit MIC10.